Consider the following 354-residue polypeptide: Selenide, water dikinase (354 aa).

Cysteine 23 is a catalytic residue. ATP is bound by residues lysine 26 and 54-56 (TAD). Aspartate 57 contributes to the Mg(2+) binding site. ATP contacts are provided by residues aspartate 74, aspartate 97, and 145-147 (GHS). Aspartate 97 provides a ligand contact to Mg(2+). Aspartate 233 is a binding site for Mg(2+).

Belongs to the selenophosphate synthase 1 family. Class I subfamily. Homodimer. It depends on Mg(2+) as a cofactor.

It carries out the reaction hydrogenselenide + ATP + H2O = selenophosphate + AMP + phosphate + 2 H(+). Synthesizes selenophosphate from selenide and ATP. The polypeptide is Selenide, water dikinase (Paraburkholderia xenovorans (strain LB400)).